The chain runs to 155 residues: Small ribosomal subunit protein uS7cz/uS7cy (155 aa).

The protein belongs to the universal ribosomal protein uS7 family. As to quaternary structure, part of the 30S ribosomal subunit.

The protein resides in the plastid. Its subcellular location is the chloroplast. One of the primary rRNA binding proteins, it binds directly to 16S rRNA where it nucleates assembly of the head domain of the 30S subunit. The protein is Small ribosomal subunit protein uS7cz/uS7cy (rps7-A) of Acorus calamus var. americanus (American sweet flag).